A 1391-amino-acid chain; its full sequence is Periaxin (1391 aa).

Position 7 is a phosphoserine (serine 7). The PDZ domain occupies 16–99 (LVEIIVETEA…YKVSFCLKRT (84 aa)). Residues 70-84 (VFFENFKYEDALRLL) carry the Nuclear export signal motif. The Nuclear localization signal signature appears at 118 to 196 (KGPRAKVAKL…RLQLPRLRVR (79 aa)). Serine 243 carries the phosphoserine modification. 12 repeat units span residues 432–436 (GPEVK), 440–444 (GPEVK), 448–452 (VPEVK), 456–460 (VPEAA), 464–468 (VQLPE), 469–473 (VQLPK), 474–478 (MSDMK), 482–486 (IPEMV), 487–491 (VPDVR), 495–499 (VQLPK), 500–504 (VPEMK), and 508–512 (MKLPK). Positions 432 to 719 (GPEVKAPTGP…MQVSQVPEVQ (288 aa)) are 45 X 5 AA approximate tandem repeats of [LVMGIED]-[PQSKHARMI]-[EDKLVTR]-[LIVMAP]-[AQKHRPEVSD]; that may have a tripeptide spacer of [LVIDEA]-[PMSVI]-[KEATDQ]. Residues 513-517 (WPEMA) form a 13; approximate repeat. 32 tandem repeats follow at residues 521–525 (VHLPD), 526–530 (VQLPK), 534–538 (MKLPK), 539–543 (VPEMA), 547–551 (VHLPD), 552–556 (VQLPK), 560–564 (MKLPE), 565–569 (MKLPK), 573–577 (MAVPD), 578–582 (VRLPE), 583–587 (VQLPK), 591–595 (VKLPK), 596–600 (MPEMA), 601–605 (VPDVH), 609–613 (LQLPK), 614–618 (MSEVK), 619–623 (LPKMP), 627–631 (VPDVR), 632–636 (LPEVQ), 637–641 (LPKVS), 645–649 (LPKMP), 650–654 (EMTMP), 655–659 (DIRLP), 663–667 (LPKVP), 671–675 (LPEMK), 676–680 (LPEIK), 684–688 (VPDMA), 689–693 (VPDVP), 697–701 (LQLPK), 702–706 (VSDIR), 707–711 (LPEMQ), and 715–719 (VPEVQ). Phosphoserine occurs at positions 848, 979, 1028, 1279, 1283, 1285, 1293, 1331, and 1337. The interval 1267-1366 (LPRVGFSQSE…DREEGGFRVR (100 aa)) is disordered. Over residues 1275–1285 (SESVSGEGSPS) the composition is skewed to low complexity. Residues 1354–1363 (GSRDREEGGF) show a composition bias toward basic and acidic residues. The residue at position 1369 (serine 1369) is a Phosphoserine.

This sequence belongs to the periaxin family. As to quaternary structure, homodimer (via PDZ domain). Interacts with SCN10A. Found in a complex with SCN10A. Interacts with DRP2. Identified in a dystroglycan complex that contains at least PRX, DRP2, UTRN, DMD and DAG1. Detected in a complex composed of at least EZR, AHNAK, PPL and PRX. Identified in a complex with EZR, AHNAK, BFSP1, BFSP2, ANK2, PLEC, VIM and spectrin. Detected in myelinating Schwann cells in intramuscular nerves in triangularis sterni. Detected in sciatic nerve. Detected in eye lens fiber cells. Isoform 1 is detected in myelinating Schwann cells in sciatic nerve. Isoform 2 is detected in myelinating Schwann cells in sciatic nerve (at protein level). Detected in sciatic nerve.

Its subcellular location is the cell membrane. The protein localises to the cell junction. It localises to the nucleus. The protein resides in the cytoplasm. Functionally, scaffolding protein that functions as part of a dystroglycan complex in Schwann cells, and as part of EZR and AHNAK-containing complexes in eye lens fiber cells. Required for the maintenance of the peripheral myelin sheath that is essential for normal transmission of nerve impulses and normal perception of sensory stimuli. Required for normal transport of MBP mRNA from the perinuclear to the paranodal regions. Required for normal remyelination after nerve injury. Required for normal elongation of Schwann cells and normal length of the internodes between the nodes of Ranvier. The demyelinated nodes of Ranvier permit saltatory transmission of nerve impulses; shorter internodes cause slower transmission of nerve impulses. Required for the formation of appositions between the abaxonal surface of the myelin sheath and the Schwann cell plasma membrane; the Schwann cell cytoplasm is restricted to regions between these appositions. Required for the formation of Cajal bands and of Schmidt-Lanterman incisures that correspond to short, cytoplasm-filled regions on myelinated nerves. Recruits DRP2 to the Schwann cell plasma membrane. Required for normal protein composition of the eye lens fiber cell plasma membrane and normal eye lens fiber cell morphology. The sequence is that of Periaxin (Prx) from Mus musculus (Mouse).